We begin with the raw amino-acid sequence, 391 residues long: MVANYASMMYHNGSNILGYGVLRLLQYNEQLMSGWESTMKDDIGYWRRFVHDFYTEKGTFRYNIDYKDSPNQEPKLFELSYAALPRFLYLSYCGKLKKMSFLLGNTKEFAIPNNGYFVESSRASILYQYQGGVQVIVSGHLRAHFFRAPLLKLDSLEFSAVGHSEYLLRELMTNASLALSQSRPPQNQIQHDGVKSEDPSSESVNINSSSSLLPDSPVNEYGLEPHIMRFMEITETISGMRDLIAFTLAQRSGPTSALHKFATALQQQHQMQKSTSSNIPYANPAPSGFNGSPRNGDVASLASNYRYAKQPPTMPANAISQANRLLDQNNIPNMDPSILPQSMPIASVPPYSLQGIKRQGTHSPMVEGENPNNNPNFYSSDMLNAQKRTKV.

Over residues 180–190 (SQSRPPQNQIQ) the composition is skewed to polar residues. 2 disordered regions span residues 180–217 (SQSRPPQNQIQHDGVKSEDPSSESVNINSSSSLLPDSP) and 366–391 (VEGENPNNNPNFYSSDMLNAQKRTKV). Over residues 201–211 (SESVNINSSSS) the composition is skewed to low complexity. Residues 370-383 (NPNNNPNFYSSDML) show a composition bias toward polar residues.

It belongs to the adn1/SEU family.

The protein localises to the nucleus. Probable transcriptional regulator involved in cell adhesion. This is Adhesion defective protein 1 (adn1) from Schizosaccharomyces pombe (strain 972 / ATCC 24843) (Fission yeast).